A 134-amino-acid chain; its full sequence is Parvalbumin-like EF-hand-containing protein (134 aa).

2 EF-hand domains span residues 55 to 90 (QLDDAIHTAFQSLDKDKSGFIEWNEIKYILSIIPSS) and 96 to 131 (LTDEEAEAMIQAADTHGDGRINYEEFSELIKKEKIP). 9 residues coordinate Ca(2+): Asp68, Asp70, Ser72, Phe74, Glu76, Glu79, Asp109, Asp113, and Glu120.

Belongs to the parvalbumin family.

This chain is Parvalbumin-like EF-hand-containing protein, found in Homo sapiens (Human).